The chain runs to 183 residues: ATP synthase subunit delta (183 aa).

Belongs to the ATPase delta chain family. As to quaternary structure, F-type ATPases have 2 components, F(1) - the catalytic core - and F(0) - the membrane proton channel. F(1) has five subunits: alpha(3), beta(3), gamma(1), delta(1), epsilon(1). F(0) has three main subunits: a(1), b(2) and c(10-14). The alpha and beta chains form an alternating ring which encloses part of the gamma chain. F(1) is attached to F(0) by a central stalk formed by the gamma and epsilon chains, while a peripheral stalk is formed by the delta and b chains.

Its subcellular location is the cell membrane. F(1)F(0) ATP synthase produces ATP from ADP in the presence of a proton or sodium gradient. F-type ATPases consist of two structural domains, F(1) containing the extramembraneous catalytic core and F(0) containing the membrane proton channel, linked together by a central stalk and a peripheral stalk. During catalysis, ATP synthesis in the catalytic domain of F(1) is coupled via a rotary mechanism of the central stalk subunits to proton translocation. In terms of biological role, this protein is part of the stalk that links CF(0) to CF(1). It either transmits conformational changes from CF(0) to CF(1) or is implicated in proton conduction. This is ATP synthase subunit delta from Mesoplasma florum (strain ATCC 33453 / NBRC 100688 / NCTC 11704 / L1) (Acholeplasma florum).